The sequence spans 809 residues: Glutamine--tRNA ligase (809 aa).

Residues 185 to 198 are compositionally biased toward basic and acidic residues; that stretch reads DLIKKKTKNNEKKK. Positions 185 to 216 are disordered; sequence DLIKKKTKNNEKKKTNSAKKSSDNSASSGPKR. The 'HIGH' region signature appears at 258-268; it reads PEPNGYLHIGH. Residues 259–261 and 265–271 each bind ATP; these read EPN and HIGHSKA. Residue aspartate 291 participates in L-glutamine binding. Serine 378 carries the post-translational modification Phosphoserine. Tyrosine 440 is an L-glutamine binding site. ATP is bound by residues threonine 459, 488–489, and 496–498; these read RL and LSK. Positions 495 to 499 match the 'KMSKS' region motif; the sequence is VLSKR.

This sequence belongs to the class-I aminoacyl-tRNA synthetase family.

It carries out the reaction tRNA(Gln) + L-glutamine + ATP = L-glutaminyl-tRNA(Gln) + AMP + diphosphate. The chain is Glutamine--tRNA ligase (GLN4) from Saccharomyces cerevisiae (strain ATCC 204508 / S288c) (Baker's yeast).